A 120-amino-acid chain; its full sequence is NAD(P)H-quinone oxidoreductase subunit 3, chloroplastic (120 aa).

A run of 3 helical transmembrane segments spans residues 3 to 23, 64 to 84, and 89 to 109; these read ILEG…IPVI, MFAL…PWAV, and LGLS…IGLV.

Belongs to the complex I subunit 3 family. NDH is composed of at least 16 different subunits, 5 of which are encoded in the nucleus.

It is found in the plastid. Its subcellular location is the chloroplast thylakoid membrane. It carries out the reaction a plastoquinone + NADH + (n+1) H(+)(in) = a plastoquinol + NAD(+) + n H(+)(out). The catalysed reaction is a plastoquinone + NADPH + (n+1) H(+)(in) = a plastoquinol + NADP(+) + n H(+)(out). Its function is as follows. NDH shuttles electrons from NAD(P)H:plastoquinone, via FMN and iron-sulfur (Fe-S) centers, to quinones in the photosynthetic chain and possibly in a chloroplast respiratory chain. The immediate electron acceptor for the enzyme in this species is believed to be plastoquinone. Couples the redox reaction to proton translocation, and thus conserves the redox energy in a proton gradient. The sequence is that of NAD(P)H-quinone oxidoreductase subunit 3, chloroplastic from Nephroselmis olivacea (Green alga).